Reading from the N-terminus, the 239-residue chain is Large ribosomal subunit protein uL2 (239 aa).

The interval 205-224 (GGHQHCGRPKTVARGTSPGR) is disordered.

This sequence belongs to the universal ribosomal protein uL2 family. In terms of assembly, part of the 50S ribosomal subunit. Forms a bridge to the 30S subunit in the 70S ribosome.

Functionally, one of the primary rRNA binding proteins. Required for association of the 30S and 50S subunits to form the 70S ribosome, for tRNA binding and peptide bond formation. It has been suggested to have peptidyltransferase activity; this is somewhat controversial. Makes several contacts with the 16S rRNA in the 70S ribosome. The chain is Large ribosomal subunit protein uL2 from Methanoculleus marisnigri (strain ATCC 35101 / DSM 1498 / JR1).